Reading from the N-terminus, the 250-residue chain is MTQNIQKNIDQVVEWLREQVRNAGAKGLTVGISGGIDSAVVACLIKKAFPENSLGVILPIKSSTKDVEHGILTAEACGIEYIEIDLGEEHNTVANKVVHQLNNKNLFNTGMERAMDSNLRARLRMSTLYAVANNLNYLVVGTDNAAEIYTGYFTKYGDGGVDILPIASLKKYEVYEWAKVLGVPKEVLEKEPSAGLWEGQTDEGEMGTSYKYIDEFLEGKAIPEKDLTVIERLHRNSAHKRTMPPSPKIG.

31–38 (GISGGIDS) contributes to the ATP binding site. A Mg(2+)-binding site is contributed by Asp37. Residue Arg122 coordinates deamido-NAD(+). Thr142 contacts ATP. Position 147 (Glu147) interacts with Mg(2+). Deamido-NAD(+) contacts are provided by Lys155 and Asp162. The ATP site is built by Lys171 and Ser193. 239–240 (HK) is a binding site for deamido-NAD(+).

Belongs to the NAD synthetase family. Homodimer.

It carries out the reaction deamido-NAD(+) + NH4(+) + ATP = AMP + diphosphate + NAD(+) + H(+). Its pathway is cofactor biosynthesis; NAD(+) biosynthesis; NAD(+) from deamido-NAD(+) (ammonia route): step 1/1. Its function is as follows. Catalyzes the ATP-dependent amidation of deamido-NAD to form NAD. Uses ammonia as a nitrogen source. The sequence is that of NH(3)-dependent NAD(+) synthetase from Alkaliphilus oremlandii (strain OhILAs) (Clostridium oremlandii (strain OhILAs)).